The chain runs to 104 residues: Large ribosomal subunit protein uL24 (104 aa).

The protein belongs to the universal ribosomal protein uL24 family. Part of the 50S ribosomal subunit.

Functionally, one of two assembly initiator proteins, it binds directly to the 5'-end of the 23S rRNA, where it nucleates assembly of the 50S subunit. In terms of biological role, one of the proteins that surrounds the polypeptide exit tunnel on the outside of the subunit. This is Large ribosomal subunit protein uL24 from Caulobacter sp. (strain K31).